The chain runs to 1312 residues: Cyclic GMP-binding protein D (1312 aa).

An N-terminal Ras-GEF domain is found at 26 to 155; that stretch reads GFSAIKSCSL…EFFKAKKMAR (130 aa). Low complexity-rich tracts occupy residues 206–236 and 275–296; these read NTMN…SSPN and NGTS…LFNQ. Disordered regions lie at residues 206–244 and 260–326; these read NTMN…RSSM and NFNN…NNVN. Positions 297-310 are enriched in polar residues; the sequence is QPSLSMLNDDGSVQ. Residues 311–326 are compositionally biased toward low complexity; that stretch reads NNNNNNNNNNNNNNVN. The Ras-GEF domain occupies 353–582; it reads LPEAIAKELT…FRLSKIREET (230 aa). The segment at 586–658 is disordered; the sequence is QSLKESNGIG…NCGNGSGISS (73 aa). The span at 591–612 shows a compositional bias: low complexity; sequence SNGIGNSNSTSGGSSSSLVNKD. Residues 613–625 are compositionally biased toward gly residues; that stretch reads GSGGGGGSGGGGS. The segment covering 630–644 has biased composition (basic and acidic residues); it reads GDGKGDGKDNRDGRG. A compositionally biased stretch (low complexity) spans 646-657; the sequence is GNSNCGNGSGIS. 698-857 is an a nucleoside 3',5'-cyclic phosphate binding site; sequence VSSTLSEREW…ATFYKFIGVI (160 aa). One can recognise a GRAM domain in the interval 940 to 1006; that stretch reads SSFRTKFGLS…DKILTVDKNI (67 aa). A compositionally biased stretch (low complexity) spans 1059–1087; it reads QQQQPSQQPSQQQSQSSQLQQSVSASSTT. Disordered regions lie at residues 1059 to 1108 and 1167 to 1210; these read QQQQ…IKDL and NNIN…NSSI. A nucleoside 3',5'-cyclic phosphate is bound by residues 1105–1218 and 1182–1303; these read IKDL…SNTS and NNNN…LACV.

Functionally, promotes the exchange of Ras-bound GDP by GTP. Induces the formation of substrate-attached pseudopodia, that leads to increased adhesion and thereby negatively influencing cell speed and polarity. The chain is Cyclic GMP-binding protein D (gbpD) from Dictyostelium discoideum (Social amoeba).